The sequence spans 253 residues: 2-succinyl-6-hydroxy-2,4-cyclohexadiene-1-carboxylate synthase (253 aa).

In terms of domain architecture, AB hydrolase-1 spans 11–147 (PWLVCLHGLF…PEALQDWYQQ (137 aa)).

Belongs to the AB hydrolase superfamily. MenH family. Monomer.

It carries out the reaction 5-enolpyruvoyl-6-hydroxy-2-succinyl-cyclohex-3-ene-1-carboxylate = (1R,6R)-6-hydroxy-2-succinyl-cyclohexa-2,4-diene-1-carboxylate + pyruvate. Its pathway is quinol/quinone metabolism; 1,4-dihydroxy-2-naphthoate biosynthesis; 1,4-dihydroxy-2-naphthoate from chorismate: step 3/7. The protein operates within quinol/quinone metabolism; menaquinone biosynthesis. In terms of biological role, catalyzes a proton abstraction reaction that results in 2,5-elimination of pyruvate from 2-succinyl-5-enolpyruvyl-6-hydroxy-3-cyclohexene-1-carboxylate (SEPHCHC) and the formation of 2-succinyl-6-hydroxy-2,4-cyclohexadiene-1-carboxylate (SHCHC). The protein is 2-succinyl-6-hydroxy-2,4-cyclohexadiene-1-carboxylate synthase of Pectobacterium atrosepticum (strain SCRI 1043 / ATCC BAA-672) (Erwinia carotovora subsp. atroseptica).